The sequence spans 84 residues: LYR motif-containing protein 4B (84 aa).

The protein belongs to the complex I LYR family.

This is LYR motif-containing protein 4B (lyrm4b) from Salmo salar (Atlantic salmon).